The chain runs to 445 residues: Asparagine--tRNA ligase (445 aa).

The protein belongs to the class-II aminoacyl-tRNA synthetase family. As to quaternary structure, homodimer.

The protein resides in the cytoplasm. The enzyme catalyses tRNA(Asn) + L-asparagine + ATP = L-asparaginyl-tRNA(Asn) + AMP + diphosphate + H(+). This chain is Asparagine--tRNA ligase, found in Deinococcus deserti (strain DSM 17065 / CIP 109153 / LMG 22923 / VCD115).